The sequence spans 238 residues: Phosphoribosylaminoimidazole-succinocarboxamide synthase (238 aa).

It belongs to the SAICAR synthetase family.

The catalysed reaction is 5-amino-1-(5-phospho-D-ribosyl)imidazole-4-carboxylate + L-aspartate + ATP = (2S)-2-[5-amino-1-(5-phospho-beta-D-ribosyl)imidazole-4-carboxamido]succinate + ADP + phosphate + 2 H(+). It functions in the pathway purine metabolism; IMP biosynthesis via de novo pathway; 5-amino-1-(5-phospho-D-ribosyl)imidazole-4-carboxamide from 5-amino-1-(5-phospho-D-ribosyl)imidazole-4-carboxylate: step 1/2. This chain is Phosphoribosylaminoimidazole-succinocarboxamide synthase, found in Persephonella marina (strain DSM 14350 / EX-H1).